A 298-amino-acid chain; its full sequence is Protease HtpX homolog (298 aa).

2 helical membrane passes run 14–34 (VVLL…AGYL) and 39–59 (YAMG…SMIF). His143 is a Zn(2+) binding site. Glu144 is an active-site residue. His147 is a binding site for Zn(2+). 2 helical membrane passes run 158 to 178 (IAVA…RMLW) and 197 to 217 (IITL…ASLI). A Zn(2+)-binding site is contributed by Glu226.

The protein belongs to the peptidase M48B family. The cofactor is Zn(2+).

The protein localises to the cell membrane. The protein is Protease HtpX homolog of Streptococcus pyogenes serotype M1.